Consider the following 567-residue polypeptide: Sporulation-specific protein 5 (567 aa).

Polar residues predominate over residues 1-18 (MNGIITPQKQKQLMSSPS). 2 disordered regions span residues 1–39 (MNGIITPQKQKQLMSSPSRDPLSTTELSTPTSQTTVDVN) and 52–76 (ILLTPGTSPNATPGSSELGLSKKPN). Positions 21–35 (PLSTTELSTPTSQTT) are enriched in low complexity. Residues 56–66 (PGTSPNATPGS) show a composition bias toward polar residues. RRM domains lie at 296 to 380 (RNVY…SLQD) and 384 to 462 (TNLY…FADS).

The protein resides in the cytoplasm. In terms of biological role, RNA-binding protein which plays a role in sporulation. Regulates the progression of meiosis I and may function in the vicinity of the Mei2 dot. This Schizosaccharomyces pombe (strain 972 / ATCC 24843) (Fission yeast) protein is Sporulation-specific protein 5 (spo5).